The chain runs to 398 residues: Ethanolaminephosphotransferase 1 (398 aa).

Ala-2 is modified (N-acetylalanine). Transmembrane regions (helical) follow at residues 47-69 (WLAP…LLLT), 84-103 (HVPD…AYTL), 123-145 (LFDH…SIFG), 150-172 (GVSV…LSHW), 179-201 (VLFL…IVTA), 221-243 (LFTA…LNFF), 256-278 (VYEA…VWIL), 291-310 (IFYF…LIVC), 319-341 (TLNW…AATS), and 345-367 (SALL…VQVV). Residue Sec-388 is a non-standard amino acid, selenocysteine.

Belongs to the CDP-alcohol phosphatidyltransferase class-I family. Requires Mg(2+) as cofactor. It depends on Mn(2+) as a cofactor.

Its subcellular location is the endoplasmic reticulum membrane. The enzyme catalyses CDP-ethanolamine + a 1,2-diacyl-sn-glycerol = a 1,2-diacyl-sn-glycero-3-phosphoethanolamine + CMP + H(+). The catalysed reaction is 1-O-alkyl-2-acyl-sn-glycerol + CDP-ethanolamine = a 1-O-alkyl-2-acyl-sn-glycero-3-phosphoethanolamine + CMP + H(+). It functions in the pathway phospholipid metabolism; phosphatidylethanolamine biosynthesis; phosphatidylethanolamine from ethanolamine: step 3/3. Its function is as follows. Ethanolaminephosphotransferase that catalyzes the transfer of phosphoethanolamine (PE) from CDP-ethanolamine to lipid acceptors, the final step in the synthesis of PE via the 'Kennedy' pathway. PE is the second most abundant phospholipid of membranes in mammals and is involved in various membrane-related cellular processes. The enzyme is critical for the synthesis of several PE species and also catalyzes the synthesis of plasmanyl-PE, a lipid required for proper myelination and neurodevelopment, from 1-alkyl-2-acylglycerol. This Mus musculus (Mouse) protein is Ethanolaminephosphotransferase 1.